A 331-amino-acid chain; its full sequence is DNA-directed RNA polymerase subunit alpha (331 aa).

Residues 1 to 225 (MLDIAMPKLE…QYSSIIADFN (225 aa)) are alpha N-terminal domain (alpha-NTD). Residues 243 to 331 (PSEIYDMPIE…AARLNDGSAE (89 aa)) form an alpha C-terminal domain (alpha-CTD) region.

The protein belongs to the RNA polymerase alpha chain family. As to quaternary structure, homodimer. The RNAP catalytic core consists of 2 alpha, 1 beta, 1 beta' and 1 omega subunit. When a sigma factor is associated with the core the holoenzyme is formed, which can initiate transcription.

The catalysed reaction is RNA(n) + a ribonucleoside 5'-triphosphate = RNA(n+1) + diphosphate. Functionally, DNA-dependent RNA polymerase catalyzes the transcription of DNA into RNA using the four ribonucleoside triphosphates as substrates. The chain is DNA-directed RNA polymerase subunit alpha from Herpetosiphon aurantiacus (strain ATCC 23779 / DSM 785 / 114-95).